The sequence spans 571 residues: Proline--tRNA ligase (571 aa).

It belongs to the class-II aminoacyl-tRNA synthetase family. ProS type 1 subfamily. As to quaternary structure, homodimer.

It localises to the cytoplasm. It carries out the reaction tRNA(Pro) + L-proline + ATP = L-prolyl-tRNA(Pro) + AMP + diphosphate. Catalyzes the attachment of proline to tRNA(Pro) in a two-step reaction: proline is first activated by ATP to form Pro-AMP and then transferred to the acceptor end of tRNA(Pro). As ProRS can inadvertently accommodate and process non-cognate amino acids such as alanine and cysteine, to avoid such errors it has two additional distinct editing activities against alanine. One activity is designated as 'pretransfer' editing and involves the tRNA(Pro)-independent hydrolysis of activated Ala-AMP. The other activity is designated 'posttransfer' editing and involves deacylation of mischarged Ala-tRNA(Pro). The misacylated Cys-tRNA(Pro) is not edited by ProRS. The sequence is that of Proline--tRNA ligase from Actinobacillus pleuropneumoniae serotype 7 (strain AP76).